A 369-amino-acid polypeptide reads, in one-letter code: C2 calcium-dependent domain-containing protein 4A (369 aa).

2 disordered regions span residues 151–176 and 197–240; these read PRAP…ARRP and RSRR…PFPE. A compositionally biased stretch (pro residues) spans 153–168; the sequence is APGPATPAAPGCPRPP. The segment covering 220–237 has biased composition (low complexity); the sequence is SQSPARAPSTSPPSSRVP. In terms of domain architecture, C2 spans 253–369; the sequence is AGDALRLAAE…ELSLGALLLL (117 aa).

The protein belongs to the C2CD4 family. As to expression, specifically expressed in endothelial cells.

The protein localises to the nucleus. May be involved in inflammatory process. May regulate cell architecture and adhesion. In Homo sapiens (Human), this protein is C2 calcium-dependent domain-containing protein 4A (C2CD4A).